Consider the following 117-residue polypeptide: Large ribosomal subunit protein bL20c (117 aa).

The protein belongs to the bacterial ribosomal protein bL20 family.

Its subcellular location is the plastid. It is found in the chloroplast. Binds directly to 23S ribosomal RNA and is necessary for the in vitro assembly process of the 50S ribosomal subunit. It is not involved in the protein synthesizing functions of that subunit. This chain is Large ribosomal subunit protein bL20c, found in Barbarea verna (Land cress).